The chain runs to 616 residues: Dihydroxy-acid dehydratase (616 aa).

Residue D81 participates in Mg(2+) binding. C122 contacts [2Fe-2S] cluster. Residues D123 and K124 each coordinate Mg(2+). K124 carries the post-translational modification N6-carboxylysine. Position 195 (C195) interacts with [2Fe-2S] cluster. E491 lines the Mg(2+) pocket. S517 functions as the Proton acceptor in the catalytic mechanism.

This sequence belongs to the IlvD/Edd family. In terms of assembly, homodimer. [2Fe-2S] cluster serves as cofactor. The cofactor is Mg(2+).

It carries out the reaction (2R)-2,3-dihydroxy-3-methylbutanoate = 3-methyl-2-oxobutanoate + H2O. It catalyses the reaction (2R,3R)-2,3-dihydroxy-3-methylpentanoate = (S)-3-methyl-2-oxopentanoate + H2O. Its pathway is amino-acid biosynthesis; L-isoleucine biosynthesis; L-isoleucine from 2-oxobutanoate: step 3/4. It participates in amino-acid biosynthesis; L-valine biosynthesis; L-valine from pyruvate: step 3/4. Its function is as follows. Functions in the biosynthesis of branched-chain amino acids. Catalyzes the dehydration of (2R,3R)-2,3-dihydroxy-3-methylpentanoate (2,3-dihydroxy-3-methylvalerate) into 2-oxo-3-methylpentanoate (2-oxo-3-methylvalerate) and of (2R)-2,3-dihydroxy-3-methylbutanoate (2,3-dihydroxyisovalerate) into 2-oxo-3-methylbutanoate (2-oxoisovalerate), the penultimate precursor to L-isoleucine and L-valine, respectively. The chain is Dihydroxy-acid dehydratase from Salmonella agona (strain SL483).